The sequence spans 475 residues: Aspartyl/glutamyl-tRNA(Asn/Gln) amidotransferase subunit B (475 aa).

The protein belongs to the GatB/GatE family. GatB subfamily. Heterotrimer of A, B and C subunits.

It catalyses the reaction L-glutamyl-tRNA(Gln) + L-glutamine + ATP + H2O = L-glutaminyl-tRNA(Gln) + L-glutamate + ADP + phosphate + H(+). The catalysed reaction is L-aspartyl-tRNA(Asn) + L-glutamine + ATP + H2O = L-asparaginyl-tRNA(Asn) + L-glutamate + ADP + phosphate + 2 H(+). Its function is as follows. Allows the formation of correctly charged Asn-tRNA(Asn) or Gln-tRNA(Gln) through the transamidation of misacylated Asp-tRNA(Asn) or Glu-tRNA(Gln) in organisms which lack either or both of asparaginyl-tRNA or glutaminyl-tRNA synthetases. The reaction takes place in the presence of glutamine and ATP through an activated phospho-Asp-tRNA(Asn) or phospho-Glu-tRNA(Gln). The polypeptide is Aspartyl/glutamyl-tRNA(Asn/Gln) amidotransferase subunit B (Macrococcus caseolyticus (strain JCSC5402) (Macrococcoides caseolyticum)).